The sequence spans 103 residues: PTS system lactose-specific EIIA component (103 aa).

Residues 1–102 (MNREEVQLLG…MKHLLEFYKR (102 aa)) enclose the PTS EIIA type-3 domain. Histidine 78 (tele-phosphohistidine intermediate) is an active-site residue. Histidine 78 bears the Phosphohistidine; by HPr mark. Aspartate 81 contributes to the Mg(2+) binding site.

Homotrimer. Requires Mg(2+) as cofactor.

It localises to the cytoplasm. Functionally, the phosphoenolpyruvate-dependent sugar phosphotransferase system (sugar PTS), a major carbohydrate active transport system, catalyzes the phosphorylation of incoming sugar substrates concomitantly with their translocation across the cell membrane. The enzyme II LacEF PTS system is involved in lactose transport. This chain is PTS system lactose-specific EIIA component, found in Staphylococcus aureus (strain COL).